A 593-amino-acid polypeptide reads, in one-letter code: MGTNNTSNNNGTTKKMSLEEFLGNDTLGESVWDEEDINLDAISNTTNIDILKQTKAGEHQRDGHQQHPHGGHGPMNRSRFSNAGPFGGGSMGDFANHHHPLQHQQGPPYIVKFSDLPPRFSNFDIEDLFQAKFTKFIKFKLFWEINKNPSISTLKSGSIFDQNFKRDSKVAFVELYTSRDMDKILNYWTTPLKEIYHITTAPAEFEDFKDYSTKVKLLTDPKDDAGKPFITKTQRSKSNPFGSAKPVDTQSKILDIEEKMENLHVEDTTTLRASLIPSSDSMATTATGSKITILKKQTPTEEESHSATPTPKPLSYSEVVERSVVNETSKKGTPLSKLDSPALELQSKPDKSDEFKGGDEQGFEKGGDDKAQLDVSNDKDKGSETDVDKQFTFKNVEREHSMSRTKYNGNHNNNNGNFRGSNRYRGGPNGSSYKGGHNNRGNRGGYRGGSSYNNNNNNTNDNNNNNNNSSSNNNNGSRYHDRQNNEEGLTSDSSLDASGNKKNDFTNSTSNTQQYSIFKPASGFLGQGNNDSIRNNGRGNYNSSGMNGGSRGRGFGRGRGFGRGAYNNRGSRGGRGSSGNYSNYNNRTTDMPL.

Residues 56–65 are compositionally biased toward basic and acidic residues; that stretch reads AGEHQRDGHQ. The segment at 56–101 is disordered; that stretch reads AGEHQRDGHQQHPHGGHGPMNRSRFSNAGPFGGGSMGDFANHHHPL. Serine 150 and serine 238 each carry phosphoserine. Disordered regions lie at residues 227–248 and 280–593; these read KPFITKTQRSKSNPFGSAKPVD and DSMA…DMPL. 2 stretches are compositionally biased toward polar residues: residues 231 to 241 and 280 to 290; these read TKTQRSKSNPF and DSMATTATGSK. Serine 340 is modified (phosphoserine). A compositionally biased stretch (basic and acidic residues) spans 347–402; the sequence is SKPDKSDEFKGGDEQGFEKGGDDKAQLDVSNDKDKGSETDVDKQFTFKNVEREHSM. The span at 408-426 shows a compositional bias: low complexity; the sequence is NGNHNNNNGNFRGSNRYRG. Omega-N-methylarginine occurs at positions 419, 425, and 440. Arginine 443 carries the dimethylated arginine modification. Arginine 447 is modified (omega-N-methylarginine). Residues 449 to 477 show a composition bias toward low complexity; the sequence is GSSYNNNNNNTNDNNNNNNNSSSNNNNGS. 2 stretches are compositionally biased toward polar residues: residues 486-497 and 505-516; these read EEGLTSDSSLDA and FTNSTSNTQQYS. Position 522 is a phosphoserine (serine 522). Residues 534 to 545 show a composition bias toward low complexity; sequence RNNGRGNYNSSG. 3 positions are modified to omega-N-methylarginine: arginine 538, arginine 551, and arginine 575. A compositionally biased stretch (gly residues) spans 546–563; sequence MNGGSRGRGFGRGRGFGR. The segment covering 578–587 has biased composition (low complexity); sequence SGNYSNYNNR.

The protein resides in the cytoplasm. The protein localises to the P-body. It localises to the stress granule. Functionally, DNA polymerase alpha mutation suppressor. Suppressor of group II intron splicing defects of a mutation in MRS2. May play a role in mitochondrial mRNA splicing. The polypeptide is Protein PSP2 (Saccharomyces cerevisiae (strain ATCC 204508 / S288c) (Baker's yeast)).